Consider the following 1402-residue polypeptide: Eukaryotic translation initiation factor 4 gamma 1 (1402 aa).

Disordered regions lie at residues 1–123 (MSGA…SPEP) and 165–402 (HEPN…YEYK). Residues Thr11 and Thr27 each carry the phosphothreonine modification. The segment covering 53-64 (GPEHSPSESQPS) has biased composition (low complexity). Positions 65–76 (SPSPTPSPPPIL) are enriched in pro residues. Ser120 is modified (phosphoserine). The segment covering 238–251 (ASATPPAVPSATPA) has biased composition (low complexity). Over residues 261–275 (QEEEGEEEEEEEEGE) the composition is skewed to acidic residues. Basic and acidic residues-rich tracts occupy residues 280–290 (ESDKGGEDLHP) and 324–340 (KELN…DAFK). Positions 359-370 (PTPESEGSSGPS) are enriched in low complexity. Positions 379 to 388 (WDAKEDKIHN) are enriched in basic and acidic residues. Residue Thr452 is modified to Phosphothreonine. Disordered stretches follow at residues 476–517 (ANLG…PPKG), 536–563 (AEKA…GSKT), 600–636 (SKGS…ATTE), and 828–1028 (MAKG…KREA). Positions 479-488 (GRPALSSRGP) are enriched in low complexity. Arg490 and Arg499 each carry omega-N-methylarginine. A compositionally biased stretch (basic and acidic residues) spans 547–563 (TAADKDRGEEDADGSKT). One can recognise an MIF4G domain in the interval 567 to 793 (FRRVRSILNK…QDVLDLRQSN (227 aa)). Over residues 602-621 (GSLTSSLRRPFQNPTSQWPS) the composition is skewed to polar residues. Ser832 carries the post-translational modification Phosphoserine. An omega-N-methylarginine mark is found at Arg836 and Arg846. Phosphoserine occurs at positions 881 and 896. Positions 892-913 (GGRLSWGKGSSGSGAKPSDAAS) are enriched in low complexity. N6-acetyllysine is present on Lys899. The segment covering 918 to 937 (PATSTLNRFSALQQAVPTES) has biased composition (polar residues). Phosphoserine is present on residues Ser948 and Ser950. The span at 949–981 (LSRERGGKAGEPRRRLERSERGGDRGDRLDRAR) shows a compositional bias: basic and acidic residues. Ser988 is subject to Phosphoserine; by PKC/PRKCA. Residues 989–1028 (FSKEVEERSRERPSQPEGLRKAASLTEDRDRGRDAAKREA) show a composition bias toward basic and acidic residues. 3 positions are modified to phosphoserine: Ser990, Ser997, and Ser1012. Position 1014 is a phosphothreonine (Thr1014). 2 positions are modified to phosphoserine: Ser1034 and Ser1041. In terms of domain architecture, MI spans 1044–1166 (ELEKKSKAII…PMGELFREIT (123 aa)). The region spanning 1231–1401 (EESEAPGQRA…REVEEEESDH (171 aa)) is the W2 domain. A Phosphoserine modification is found at Ser1399.

This sequence belongs to the eukaryotic initiation factor 4G family. As to quaternary structure, eIF4F is a multi-subunit complex, the composition of which varies with external and internal environmental conditions. It is composed of at least EIF4A, EIF4E (cap-binding) and EIF4G1/EIF4G3. Interacts with eIF3 complex, mutually exclusive with EIF4A1 or EIF4A2, EIF4E and through its N-terminus with PABPC1. Interacts with EIF4E or with EIF1 (mutually exclusive) through a common binding site. Interacts through its C-terminus with the serine/threonine kinases MKNK1, and with MKNK2. Appears to act as a scaffold protein, holding these enzymes in place to phosphorylate EIF4E. Non-phosphorylated EIF4EBP1 competes with EIF4G1/EIF4G3 to interact with EIF4E; insulin stimulated MAP-kinase (MAPK1 and MAPK3) phosphorylation of EIF4EBP1 causes dissociation of the complex allowing EIF4G1/EIF4G3 to bind and consequent initiation of translation. EIF4G1/EIF4G3 interacts with PABPC1 to bring about circularization of the mRNA. Interacts with EIF4E3. Interacts with CIRBP and MIF4GD. Interacts with RBM4. Interacts with HNRNPD/AUF1; the interaction requires RNA. Interacts with DDX3X; the interaction requires RNA. Interacts with DAZAP2. In terms of processing, phosphorylated at multiple sites in vivo. Phosphorylation at Ser-988 by PRKCA induces binding to MKNK1.

The protein resides in the cytoplasm. The protein localises to the nucleus. It localises to the stress granule. Functionally, component of the protein complex eIF4F, which is involved in the recognition of the mRNA cap, ATP-dependent unwinding of 5'-terminal secondary structure and recruitment of mRNA to the ribosome. Exists in two complexes, either with EIF1 or with EIF4E (mutually exclusive). Together with EIF1, is required for leaky scanning, in particular for avoiding cap-proximal start codon. Together with EIF4E, antagonizes the scanning promoted by EIF1-EIF4G1 and locates the start codon (through a TISU element) without scanning. As a member of the eIF4F complex, required for endoplasmic reticulum stress-induced ATF4 mRNA translation. In Oryctolagus cuniculus (Rabbit), this protein is Eukaryotic translation initiation factor 4 gamma 1 (EIF4G1).